Consider the following 288-residue polypeptide: Ribosomal RNA small subunit methyltransferase A (288 aa).

Over residues 1 to 14 (MSKNQGGNKHQGGS) the composition is skewed to polar residues. Residues 1–21 (MSKNQGGNKHQGGSKTHLGHR) are disordered. Residues Asn-29, Leu-31, Gly-56, Glu-77, Asp-102, and Asn-122 each contribute to the S-adenosyl-L-methionine site.

Belongs to the class I-like SAM-binding methyltransferase superfamily. rRNA adenine N(6)-methyltransferase family. RsmA subfamily.

It localises to the cytoplasm. The enzyme catalyses adenosine(1518)/adenosine(1519) in 16S rRNA + 4 S-adenosyl-L-methionine = N(6)-dimethyladenosine(1518)/N(6)-dimethyladenosine(1519) in 16S rRNA + 4 S-adenosyl-L-homocysteine + 4 H(+). Functionally, specifically dimethylates two adjacent adenosines (A1518 and A1519) in the loop of a conserved hairpin near the 3'-end of 16S rRNA in the 30S particle. May play a critical role in biogenesis of 30S subunits. The protein is Ribosomal RNA small subunit methyltransferase A of Idiomarina loihiensis (strain ATCC BAA-735 / DSM 15497 / L2-TR).